Here is an 809-residue protein sequence, read N- to C-terminus: WD repeat protein iqw1 (809 aa).

WD repeat units follow at residues 43–82, 87–128, 141–180, 193–233, and 241–295; these read GHTG…KPRH, GHVQ…EGGM, CALD…VCNQ, PYRI…KSFR, and SPEK…LFHV. Positions 599–644 are disordered; that stretch reads SMYTGHSDLNDDDDDYQDEESYSYASDDDDESDEDSDEGPTLLSLR. A compositionally biased stretch (acidic residues) spans 608 to 636; sequence NDDDDDYQDEESYSYASDDDDESDEDSDE. WD repeat units lie at residues 668-708 and 711-750; these read CNVE…ILAI and GDSE…PSGC.

In terms of assembly, interacts with ddb1.

The protein resides in the cytoplasm. Ligand-dependent coactivator of nuclear receptors that may function as a substrate receptor for CUL4-DDB1 E3 ubiquitin-protein ligase complex. The protein is WD repeat protein iqw1 (iqw1) of Schizosaccharomyces pombe (strain 972 / ATCC 24843) (Fission yeast).